Consider the following 184-residue polypeptide: NADH-quinone oxidoreductase subunit B (184 aa).

4 residues coordinate [4Fe-4S] cluster: C63, C64, C128, and C158.

It belongs to the complex I 20 kDa subunit family. As to quaternary structure, NDH-1 is composed of 14 different subunits. Subunits NuoB, C, D, E, F, and G constitute the peripheral sector of the complex. [4Fe-4S] cluster is required as a cofactor.

It localises to the cell inner membrane. It carries out the reaction a quinone + NADH + 5 H(+)(in) = a quinol + NAD(+) + 4 H(+)(out). Functionally, NDH-1 shuttles electrons from NADH, via FMN and iron-sulfur (Fe-S) centers, to quinones in the respiratory chain. The immediate electron acceptor for the enzyme in this species is believed to be ubiquinone. Couples the redox reaction to proton translocation (for every two electrons transferred, four hydrogen ions are translocated across the cytoplasmic membrane), and thus conserves the redox energy in a proton gradient. The polypeptide is NADH-quinone oxidoreductase subunit B (Xylella fastidiosa (strain M12)).